The following is a 502-amino-acid chain: MEEYQGYFELDGYQQHDFLYPLIFREYIYALAHDHGLNRSVLLDNVGYDNKSSLLIIKRLISRMYQQNHLIISANDSNQNKFFGYNKNLYSQIISEGFAVIVEIPFSLRSVSSLETTETEIVKSYNLRSLHSLFPFLEDKFPHLNYVSDVLIPYPIHLEILVQTLRYWVKDPSSLHLLRLFLHEYYNYNWNSLITPNKFIKSNPRLFLLLYNSHVCEYESIFLFLRNQSSHLRLTSYGIFFEQIHFYEKIKYPVENDFTVAILWFFKDPFMHYVRYQGKSILASKDTPLLMNKWKYYLVNLWQCHSYVWSQPGRIYINQLSKHSLYFLGYFSSMRPNLSVVRSQMLENSFIMDNAMKKLDTLVPIIPLIVSLAKVKFCNALGHPISKSTWADSSDFDIIDRFVRICRNISHYYSGSSRKKSLYRIKYILRLSCVKTLARKHKSTVRTFLKRFGSKLLEEFFTEEEQIRSLIFPRASYTLNKFYRGRIWYFDIFYINDLVNHE.

The protein belongs to the intron maturase 2 family. MatK subfamily.

It is found in the plastid. The protein resides in the chloroplast. Functionally, usually encoded in the trnK tRNA gene intron. Probably assists in splicing its own and other chloroplast group II introns. The chain is Maturase K from Spiraea cantoniensis (Reeve's meadowsweet).